Consider the following 320-residue polypeptide: Aspartate carbamoyltransferase catalytic subunit (320 aa).

Carbamoyl phosphate-binding residues include arginine 68 and threonine 69. Residue lysine 96 participates in L-aspartate binding. Arginine 118, histidine 148, and glutamine 151 together coordinate carbamoyl phosphate. 2 residues coordinate L-aspartate: arginine 181 and arginine 236. 2 residues coordinate carbamoyl phosphate: glycine 277 and proline 278.

The protein belongs to the aspartate/ornithine carbamoyltransferase superfamily. ATCase family. In terms of assembly, heterododecamer (2C3:3R2) of six catalytic PyrB chains organized as two trimers (C3), and six regulatory PyrI chains organized as three dimers (R2).

It catalyses the reaction carbamoyl phosphate + L-aspartate = N-carbamoyl-L-aspartate + phosphate + H(+). Its pathway is pyrimidine metabolism; UMP biosynthesis via de novo pathway; (S)-dihydroorotate from bicarbonate: step 2/3. Functionally, catalyzes the condensation of carbamoyl phosphate and aspartate to form carbamoyl aspartate and inorganic phosphate, the committed step in the de novo pyrimidine nucleotide biosynthesis pathway. This is Aspartate carbamoyltransferase catalytic subunit from Methylibium petroleiphilum (strain ATCC BAA-1232 / LMG 22953 / PM1).